The following is a 512-amino-acid chain: Endoglucanase 14 (512 aa).

A signal peptide spans 1 to 22 (MLAAAIELVVIATSCMVRDAHG). Asn-76 carries an N-linked (GlcNAc...) asparagine glycan. The Nucleophile role is filled by Asp-103. 2 N-linked (GlcNAc...) asparagine glycosylation sites follow: Asn-192 and Asn-215. Catalysis depends on residues His-433, Asp-484, and Glu-493.

It belongs to the glycosyl hydrolase 9 (cellulase E) family.

The protein localises to the secreted. It catalyses the reaction Endohydrolysis of (1-&gt;4)-beta-D-glucosidic linkages in cellulose, lichenin and cereal beta-D-glucans.. This chain is Endoglucanase 14, found in Oryza sativa subsp. japonica (Rice).